The primary structure comprises 156 residues: Small ribosomal subunit protein uS7 (156 aa).

It belongs to the universal ribosomal protein uS7 family. In terms of assembly, part of the 30S ribosomal subunit. Contacts proteins S9 and S11.

In terms of biological role, one of the primary rRNA binding proteins, it binds directly to 16S rRNA where it nucleates assembly of the head domain of the 30S subunit. Is located at the subunit interface close to the decoding center, probably blocks exit of the E-site tRNA. The protein is Small ribosomal subunit protein uS7 of Streptococcus gordonii (strain Challis / ATCC 35105 / BCRC 15272 / CH1 / DL1 / V288).